The sequence spans 308 residues: D-2-hydroxyacid dehydrogenase (308 aa).

NAD(+) contacts are provided by residues 145–146, 224–226, and Asp-250; these read TL and VAR. Arg-226 is an active-site residue. The active site involves Glu-255. His-274 acts as the Proton donor in catalysis. 274–277 serves as a coordination point for NAD(+); it reads HVSA.

This sequence belongs to the D-isomer specific 2-hydroxyacid dehydrogenase family. In terms of assembly, homotetramer.

Functionally, catalyzes the stereospecific NAD(P)H-dependent reduction of 2-ketocarboxylic acids into the corresponding D-2-hydroxycarboxylic acids. Can use both NADPH or NADH as reductant, displaying a marked preference for NADPH over NADH. Shows a broad substrate specificity, although it displays a marked preference for the 2-ketocarboxylic acids having an unbranched chain of 4-5 carbon atoms. The protein is D-2-hydroxyacid dehydrogenase (ddh) of Haloferax mediterranei (strain ATCC 33500 / DSM 1411 / JCM 8866 / NBRC 14739 / NCIMB 2177 / R-4) (Halobacterium mediterranei).